A 439-amino-acid chain; its full sequence is O-methyltransferase aurJ (439 aa).

D283 is an S-adenosyl-L-methionine binding site. The active-site Proton acceptor is the H338.

The protein belongs to the class I-like SAM-binding methyltransferase superfamily. Cation-independent O-methyltransferase family. COMT subfamily.

The enzyme catalyses norrubrofusarin + S-adenosyl-L-methionine = rubrofusarin + S-adenosyl-L-homocysteine + H(+). It participates in pigment biosynthesis. Its function is as follows. O-methyltransferase; part of the gene cluster that mediates the biosynthesis of aurofusarin, a red mycelium pigment which is acting as a mycotoxin. The first step is performed by the polyketide synthase which condenses one acetyl-CoA and 6 malonyl-CoA units to form the first intermediate, the cyclic heptaketide and yellow pigment YWA1. The C2 hydroxyl group in the pyrone ring of YWA1 is probably formed during ring closure by an aldol-type cyclization reaction. The dehydratase aurZ then acts as the first tailoring enzyme in the aurofusarin biosynthetic pathway by converting YWA1 to nor-rubrofusarin. Nor-rubrofusarin is then methylated to rubrofusarin by the O-methyltransferase aurJ. Rubrofusarin is then transported across the plasma membrane by the rubrofusarin-specific pump aurT for further enzymatic processing by the extracellular complex composed of GIP1, aurF, aurO and aurS to yield aurofusarin. The chain is O-methyltransferase aurJ from Gibberella zeae (strain ATCC MYA-4620 / CBS 123657 / FGSC 9075 / NRRL 31084 / PH-1) (Wheat head blight fungus).